A 440-amino-acid chain; its full sequence is Chromosome partition protein MukF (440 aa).

The leucine-zipper stretch occupies residues 208 to 236 (LSETSGTLRELQDTLEAAGDKLQANLLRI).

The protein belongs to the MukF family. Interacts, and probably forms a ternary complex, with MukE and MukB via its C-terminal region. The complex formation is stimulated by calcium or magnesium. It is required for an interaction between MukE and MukB.

Its subcellular location is the cytoplasm. The protein localises to the nucleoid. Its function is as follows. Involved in chromosome condensation, segregation and cell cycle progression. May participate in facilitating chromosome segregation by condensation DNA from both sides of a centrally located replisome during cell division. Not required for mini-F plasmid partitioning. Probably acts via its interaction with MukB and MukE. Overexpression results in anucleate cells. It has a calcium binding activity. In Shigella boydii serotype 18 (strain CDC 3083-94 / BS512), this protein is Chromosome partition protein MukF.